The primary structure comprises 441 residues: Probable acetylornithine aminotransferase, mitochondrial (441 aa).

Residue lysine 294 is modified to N6-(pyridoxal phosphate)lysine.

It belongs to the class-III pyridoxal-phosphate-dependent aminotransferase family. Pyridoxal 5'-phosphate is required as a cofactor.

Its subcellular location is the mitochondrion matrix. It carries out the reaction N(2)-acetyl-L-ornithine + 2-oxoglutarate = N-acetyl-L-glutamate 5-semialdehyde + L-glutamate. It participates in amino-acid biosynthesis; L-arginine biosynthesis; N(2)-acetyl-L-ornithine from L-glutamate: step 4/4. The sequence is that of Probable acetylornithine aminotransferase, mitochondrial (arg1) from Schizosaccharomyces pombe (strain 972 / ATCC 24843) (Fission yeast).